Consider the following 264-residue polypeptide: Phosphatidylglycerol--prolipoprotein diacylglyceryl transferase (264 aa).

7 consecutive transmembrane segments (helical) span residues 14–34 (VGPL…LLFM), 57–77 (LLLY…VLFF), 89–109 (ILAI…VLVA), 127–147 (FIAP…FING), 176–196 (QLYQ…VYSA), 202–222 (KAVS…AEFF), and 235–255 (LGLS…VGLL). Arg-140 contacts a 1,2-diacyl-sn-glycero-3-phospho-(1'-sn-glycerol).

The protein belongs to the Lgt family.

The protein resides in the cell inner membrane. It catalyses the reaction L-cysteinyl-[prolipoprotein] + a 1,2-diacyl-sn-glycero-3-phospho-(1'-sn-glycerol) = an S-1,2-diacyl-sn-glyceryl-L-cysteinyl-[prolipoprotein] + sn-glycerol 1-phosphate + H(+). It functions in the pathway protein modification; lipoprotein biosynthesis (diacylglyceryl transfer). Its function is as follows. Catalyzes the transfer of the diacylglyceryl group from phosphatidylglycerol to the sulfhydryl group of the N-terminal cysteine of a prolipoprotein, the first step in the formation of mature lipoproteins. In Aromatoleum aromaticum (strain DSM 19018 / LMG 30748 / EbN1) (Azoarcus sp. (strain EbN1)), this protein is Phosphatidylglycerol--prolipoprotein diacylglyceryl transferase.